We begin with the raw amino-acid sequence, 411 residues long: Corticotropin-releasing factor receptor 2 (411 aa).

The not cleaved signal peptide spans Met1–Ala19. Residues Met1–Lys108 are Extracellular-facing. Asn13, Asn41, Asn74, Asn86, and Asn94 each carry an N-linked (GlcNAc...) asparagine glycan. 4 disulfide bridges follow: Cys14–Cys50, Cys40–Cys83, Trp51–Arg77, and Cys64–Cys98. The chain crosses the membrane as a helical span at residues Tyr109 to Leu139. Residues Ala140–Cys146 are Cytoplasmic-facing. The helical transmembrane segment at Leu147–Leu171 threads the bilayer. The Extracellular segment spans residues Val172 to Arg185. The cysteines at positions 184 and 254 are disulfide-linked. Residues Cys186 to Val214 form a helical membrane-spanning segment. Over Met215–Arg221 the chain is Cytoplasmic. The helical transmembrane segment at Leu222 to Tyr249 threads the bilayer. The Extracellular portion of the chain corresponds to Glu250–Asp265. Residues Tyr266 to Met291 form a helical membrane-spanning segment. The Cytoplasmic portion of the chain corresponds to Thr292–Thr302. Residues Ile303 to Phe327 traverse the membrane as a helical segment. Residues Val328–Asp334 are Extracellular-facing. Residues Leu335–Gly364 form a helical membrane-spanning segment. Over Glu365 to Val411 the chain is Cytoplasmic.

Belongs to the G-protein coupled receptor 2 family. Monomer. Interacts (via N-terminal extracellular domain) with CRF, UCN, UCN2 and UCN3. Has highest affinity for UCN, and considerably lower affinity for CRF, UNC2 and UCN3. Post-translationally, a N-glycosylation site within the signal peptide impedes its proper cleavage and function.

The protein localises to the cell membrane. In terms of biological role, G-protein coupled receptor for CRH (corticotropin-releasing factor), UCN (urocortin), UCN2 and UCN3. Has high affinity for UCN. Ligand binding causes a conformation change that triggers signaling via guanine nucleotide-binding proteins (G proteins) and down-stream effectors, such as adenylate cyclase. Promotes the activation of adenylate cyclase, leading to increased intracellular cAMP levels. This is Corticotropin-releasing factor receptor 2 (CRHR2) from Homo sapiens (Human).